The following is a 312-amino-acid chain: Porphobilinogen deaminase (312 aa).

Cysteine 241 carries the S-(dipyrrolylmethanemethyl)cysteine modification.

The protein belongs to the HMBS family. As to quaternary structure, monomer. Dipyrromethane serves as cofactor.

It carries out the reaction 4 porphobilinogen + H2O = hydroxymethylbilane + 4 NH4(+). It functions in the pathway porphyrin-containing compound metabolism; protoporphyrin-IX biosynthesis; coproporphyrinogen-III from 5-aminolevulinate: step 2/4. It participates in porphyrin-containing compound metabolism; chlorophyll biosynthesis. Tetrapolymerization of the monopyrrole PBG into the hydroxymethylbilane pre-uroporphyrinogen in several discrete steps. In Chlorobaculum parvum (strain DSM 263 / NCIMB 8327) (Chlorobium vibrioforme subsp. thiosulfatophilum), this protein is Porphobilinogen deaminase (hemC).